Consider the following 364-residue polypeptide: Eukaryotic translation initiation factor 3 subunit H (364 aa).

The MPN domain occupies 13-162; it reads VQVDALVAIK…LRAYRLSPSF (150 aa).

Belongs to the eIF-3 subunit H family. Component of the eukaryotic translation initiation factor 3 (eIF-3) complex.

The protein localises to the cytoplasm. Functionally, component of the eukaryotic translation initiation factor 3 (eIF-3) complex, which is involved in protein synthesis of a specialized repertoire of mRNAs and, together with other initiation factors, stimulates binding of mRNA and methionyl-tRNAi to the 40S ribosome. The eIF-3 complex specifically targets and initiates translation of a subset of mRNAs involved in cell proliferation. In Phaeosphaeria nodorum (strain SN15 / ATCC MYA-4574 / FGSC 10173) (Glume blotch fungus), this protein is Eukaryotic translation initiation factor 3 subunit H.